A 72-amino-acid chain; its full sequence is DNA gyrase inhibitor YacG (72 aa).

Zn(2+)-binding residues include cysteine 17, cysteine 20, cysteine 32, and cysteine 36. A disordered region spans residues 51-72 (IPGPEEEEMSYPPRSDDENRSR).

Belongs to the DNA gyrase inhibitor YacG family. Interacts with GyrB. Zn(2+) serves as cofactor.

Functionally, inhibits all the catalytic activities of DNA gyrase by preventing its interaction with DNA. Acts by binding directly to the C-terminal domain of GyrB, which probably disrupts DNA binding by the gyrase. The sequence is that of DNA gyrase inhibitor YacG from Methylorubrum extorquens (strain PA1) (Methylobacterium extorquens).